We begin with the raw amino-acid sequence, 521 residues long: Cytochrome P450 1A1 (521 aa).

Phe229 contributes to the substrate binding site. Cys463 is a binding site for heme.

Belongs to the cytochrome P450 family. Heme serves as cofactor.

The protein resides in the endoplasmic reticulum membrane. It localises to the microsome membrane. It carries out the reaction an organic molecule + reduced [NADPH--hemoprotein reductase] + O2 = an alcohol + oxidized [NADPH--hemoprotein reductase] + H2O + H(+). Its function is as follows. Cytochromes P450 are a group of heme-thiolate monooxygenases. They oxidize a variety of structurally unrelated compounds, including steroids, fatty acids, and xenobiotics. This Platichthys flesus (European flounder) protein is Cytochrome P450 1A1 (cyp1a1).